The chain runs to 292 residues: NAD kinase (292 aa).

Residue Asp-72 is the Proton acceptor of the active site. NAD(+)-binding positions include 72–73 (DG), 146–147 (NE), His-157, Arg-174, Asp-176, and 187–192 (TAYALS).

It belongs to the NAD kinase family. It depends on a divalent metal cation as a cofactor.

It localises to the cytoplasm. It catalyses the reaction NAD(+) + ATP = ADP + NADP(+) + H(+). In terms of biological role, involved in the regulation of the intracellular balance of NAD and NADP, and is a key enzyme in the biosynthesis of NADP. Catalyzes specifically the phosphorylation on 2'-hydroxyl of the adenosine moiety of NAD to yield NADP. This chain is NAD kinase, found in Shewanella oneidensis (strain ATCC 700550 / JCM 31522 / CIP 106686 / LMG 19005 / NCIMB 14063 / MR-1).